Reading from the N-terminus, the 92-residue chain is Small ribosomal subunit protein uS19 (92 aa).

It belongs to the universal ribosomal protein uS19 family.

In terms of biological role, protein S19 forms a complex with S13 that binds strongly to the 16S ribosomal RNA. The polypeptide is Small ribosomal subunit protein uS19 (Thermobifida fusca (strain YX)).